The primary structure comprises 649 residues: Leucine-rich repeat transmembrane protein FLRT3 (649 aa).

The first 28 residues, 1-28 (MISPAWSIFLIGTKIGLFLQVAPLSVMA), serve as a signal peptide directing secretion. The LRRNT domain occupies 29–58 (KSCPSVCRCDAGFIYCNDRFLTSIPTGIPE). The Extracellular portion of the chain corresponds to 29–528 (KSCPSVCRCD…KEPYKNPNLP (500 aa)). Intrachain disulfides connect Cys31/Cys37 and Cys35/Cys44. An interaction with ADGRL3 region spans residues 38–67 (DAGFIYCNDRFLTSIPTGIPEDATTLYLQN). LRR repeat units follow at residues 59–80 (DATT…SDLK), 84–104 (KVER…NLPK), 105–126 (YVKE…SLSK), 129–150 (YLEE…EGAF), 155–176 (YLRL…LPRT), 177–197 (IEEL…SLQG), 200–220 (SLKR…GDKV), 226–247 (NLTE…LPGT), 248–269 (NLRK…AFSY), and 272–293 (QLYR…IFDD). A glycan (N-linked (GlcNAc...) asparagine) is linked at Asn226. N-linked (GlcNAc...) asparagine glycosylation is found at Asn282 and Asn296. An LRRCT domain is found at 305–357 (NPWYCGCKMKWVRDWLQSLPVKVNVRGLMCQAPEKVRGMAIKDLNAELFDCKD). A disulfide bond links Cys309 and Cys334. The segment at 385 to 407 (VTKQPDIKNPKLTKDHQTTGSPS) is disordered. The segment covering 389 to 401 (PDIKNPKLTKDHQ) has biased composition (basic and acidic residues). Residues 409 to 504 (KTITITVKSV…VCIETETAPL (96 aa)) form the Fibronectin type-III domain. A helical membrane pass occupies residues 529–549 (LAAIIGGAVALVTIALLALVC). The Cytoplasmic segment spans residues 550–649 (WYVHRNGSLF…GIPDSDHSHS (100 aa)). Residues 622–649 (LYKNNHSESSSNRSYRDSGIPDSDHSHS) are disordered.

As to quaternary structure, monomer and homodimer. Self-associates (via leucine-rich repeats), giving rise to homooligomers. Interacts with FGFR1. Interacts (via extracellular domain) with ADGRL1/LPHN1 and LPHN2 (via olfactomedin-like domain). Interacts (via extracellular domain) with ADGRL3 (via olfactomedin-like domain); the interaction is direct. Interacts (via extracellular domain) with UNC5B and UNC5D (via extracellular domain); the interaction is direct. Identified in complexes composed of FLRT3, ADGRL3 and UNC5B, respectively FLRT3, ADGRL3 and UNC5D. May also interact (via extracellular domain) with UNC5A and UNC5C. Interacts (via cytoplasmic domain) with ROBO1. N-glycosylated. In terms of processing, proteolytic cleavage in the juxtamembrane region gives rise to a soluble ectodomain. Cleavage is probably effected by a metalloprotease.

The protein localises to the cell membrane. It localises to the presynaptic cell membrane. It is found in the endoplasmic reticulum membrane. Its subcellular location is the cell junction. The protein resides in the focal adhesion. The protein localises to the secreted. It localises to the cell projection. It is found in the axon. Its subcellular location is the growth cone membrane. In terms of biological role, functions in cell-cell adhesion, cell migration and axon guidance, exerting an attractive or repulsive role depending on its interaction partners. Plays a role in the spatial organization of brain neurons. Plays a role in vascular development in the retina. Plays a role in cell-cell adhesion via its interaction with ADGRL3 and probably also other latrophilins that are expressed at the surface of adjacent cells. Interaction with the intracellular domain of ROBO1 mediates axon attraction towards cells expressing NTN1. Mediates axon growth cone collapse and plays a repulsive role in neuron guidance via its interaction with UNC5B, and possibly also other UNC-5 family members. Promotes neurite outgrowth (in vitro). Mediates cell-cell contacts that promote an increase both in neurite number and in neurite length. Plays a role in the regulation of the density of glutamaergic synapses. Plays a role in fibroblast growth factor-mediated signaling cascades. Required for normal morphogenesis during embryonic development, but not for normal embryonic patterning. Required for normal ventral closure, headfold fusion and definitive endoderm migration during embryonic development. Required for the formation of a normal basement membrane and the maintenance of a normal anterior visceral endoderm during embryonic development. This chain is Leucine-rich repeat transmembrane protein FLRT3 (FLRT3), found in Pongo abelii (Sumatran orangutan).